The primary structure comprises 460 residues: Muscarinic acetylcholine receptor M1 (460 aa).

Residues 1–22 (MNTSAPPAVSPNITVLAPGKGP) lie on the Extracellular side of the membrane. N2 and N12 each carry an N-linked (GlcNAc...) asparagine glycan. Residues 23-48 (WQVAFIGITTGLLSLATVTGNLLVLI) traverse the membrane as a helical segment. Over 49-62 (SFKVNTELKTVNNY) the chain is Cytoplasmic. The chain crosses the membrane as a helical span at residues 63 to 84 (FLLSLACADLIIGTFSMNLYTT). The Extracellular portion of the chain corresponds to 85-95 (YLLMGHWALGT). Residues 96–121 (LACDLWLALDYVASNASVMNLLLISF) traverse the membrane as a helical segment. C98 and C178 are oxidised to a cystine. Topologically, residues 122-142 (DRYFSVTRPLSYRAKRTPRRA) are cytoplasmic. The helical transmembrane segment at 143–164 (ALMIGLAWLVSFVLWAPAILFW) threads the bilayer. Residues 165–185 (QYLVGERTVLAGQCYIQFLSQ) are Extracellular-facing. The helical transmembrane segment at 186–209 (PIITFGTAMAAFYLPVTVMCTLYW) threads the bilayer. Over 210 to 366 (RIYRETENRA…LVKEKKAART (157 aa)) the chain is Cytoplasmic. 3 disordered regions span residues 225–259 (LQGS…PGRC), 273–297 (SWKE…EEPG), and 310–351 (EAQA…QLAK). T230 carries the post-translational modification Phosphothreonine. The segment covering 238–247 (SSSSERSQPG) has biased composition (low complexity). Residues 328-343 (RPTKKGRDRAGKGQKP) are compositionally biased toward basic residues. Residues 367-390 (LSAILLAFILTWTPYNIMVLVSTF) traverse the membrane as a helical segment. Over 391–401 (CKDCVPETLWE) the chain is Extracellular. The helical transmembrane segment at 402 to 420 (LGYWLCYVNSTINPMCYAL) threads the bilayer. The Cytoplasmic segment spans residues 421-460 (CNKAFRDTFRLLLLCRWDKRRWRKIPKRPGSVHRTPSRQC). T428 carries the post-translational modification Phosphothreonine. S451 is subject to Phosphoserine. T455 bears the Phosphothreonine mark. A Phosphoserine modification is found at S457.

Belongs to the G-protein coupled receptor 1 family. Muscarinic acetylcholine receptor subfamily. CHRM1 sub-subfamily. As to quaternary structure, interacts with GPRASP2. Interacts with TMEM147.

The protein localises to the cell membrane. It localises to the postsynaptic cell membrane. Its function is as follows. The muscarinic acetylcholine receptor mediates various cellular responses, including inhibition of adenylate cyclase, breakdown of phosphoinositides and modulation of potassium channels through the action of G proteins. Primary transducing effect is Pi turnover. This is Muscarinic acetylcholine receptor M1 (CHRM1) from Macaca mulatta (Rhesus macaque).